A 104-amino-acid chain; its full sequence is Large ribosomal subunit protein uL24 (104 aa).

The protein belongs to the universal ribosomal protein uL24 family. Part of the 50S ribosomal subunit.

Its function is as follows. One of two assembly initiator proteins, it binds directly to the 5'-end of the 23S rRNA, where it nucleates assembly of the 50S subunit. One of the proteins that surrounds the polypeptide exit tunnel on the outside of the subunit. In Bartonella bacilliformis (strain ATCC 35685 / KC583 / Herrer 020/F12,63), this protein is Large ribosomal subunit protein uL24.